A 220-amino-acid chain; its full sequence is MESVLNFLTNINVIFTLLGYLIGGIPFGYALMKIFYGMDITKIGSGGIGATNVLRALQSKGVSNAKQMALLVLILDLFKGMFAVFLSKLFGLDYSLQWMVAIASILGHCYSPFLNFNGGKGVSTIMGSVVLLIPIESLIGLTVWFFVGKVLKISSLASILGVGTATVLIFFVPYMHIPDSVNILKEVGTQTPMVLIFIFTLIKHAGNIFNLLAGKEKKVL.

6 helical membrane-spanning segments follow: residues 11–31 (INVI…GYAL), 70–90 (LLVL…SKLF), 96–116 (LQWM…FLNF), 127–147 (GSVV…WFFV), 153–173 (ISSL…FFVP), and 193–213 (MVLI…NLLA).

It belongs to the PlsY family. In terms of assembly, probably interacts with PlsX.

Its subcellular location is the cell inner membrane. It carries out the reaction an acyl phosphate + sn-glycerol 3-phosphate = a 1-acyl-sn-glycero-3-phosphate + phosphate. Its pathway is lipid metabolism; phospholipid metabolism. Functionally, catalyzes the transfer of an acyl group from acyl-phosphate (acyl-PO(4)) to glycerol-3-phosphate (G3P) to form lysophosphatidic acid (LPA). This enzyme utilizes acyl-phosphate as fatty acyl donor, but not acyl-CoA or acyl-ACP. The chain is Glycerol-3-phosphate acyltransferase from Helicobacter pylori (strain ATCC 700392 / 26695) (Campylobacter pylori).